Here is a 171-residue protein sequence, read N- to C-terminus: MTNTQKAILAGGCFWGMQELIRKQPGVVSTRVGYTGGDVPNATYRNHGTHAEAVEIIYDPAVTDYRQILEFFFQIHDPTTKDRQGNDRGPSYRSAIFYTDDEQKRIALDTIADVEASGLWPGKVVTEVSPAGDFWEAEPEHQDYLQRYPNGYTCHYIRPGWKLPRRATSGS.

Residue Cys13 is part of the active site.

It belongs to the MsrA Met sulfoxide reductase family.

It carries out the reaction L-methionyl-[protein] + [thioredoxin]-disulfide + H2O = L-methionyl-(S)-S-oxide-[protein] + [thioredoxin]-dithiol. It catalyses the reaction [thioredoxin]-disulfide + L-methionine + H2O = L-methionine (S)-S-oxide + [thioredoxin]-dithiol. Has an important function as a repair enzyme for proteins that have been inactivated by oxidation. Catalyzes the reversible oxidation-reduction of methionine sulfoxide in proteins to methionine. The protein is Peptide methionine sulfoxide reductase MsrA of Mycolicibacterium paratuberculosis (strain ATCC BAA-968 / K-10) (Mycobacterium paratuberculosis).